A 21-amino-acid chain; its full sequence is SSANPQITRKRHKINSFVGLM.

Positions 1–21 are disordered; that stretch reads SSANPQITRKRHKINSFVGLM. Residue Met-21 is modified to Methionine amide.

It belongs to the tachykinin family.

The protein resides in the secreted. Functionally, tachykinins are active peptides which excite neurons, evoke behavioral responses, and contract (directly or indirectly) many smooth muscles. Is a potent vasoconstrictor and secretagogue that plays a regulatory role in the central control of ventilation, in particular, the heart rate variability (HRV). This Oncorhynchus mykiss (Rainbow trout) protein is Neuropeptide gamma.